The following is an 869-amino-acid chain: Phenylalanine--tRNA ligase beta subunit (869 aa).

A tRNA-binding domain is found at 41-162; that stretch reads SQVTGPIVVG…QYGFSEAEYE (122 aa). A B5 domain is found at 443 to 519; it reads PRAKAIHFKA…RLVGYDQIPI (77 aa). The Mg(2+) site is built by aspartate 497, aspartate 503, glutamate 506, and glutamate 507. The FDX-ACB domain occupies 776 to 868; that stretch reads STFPPVKQDL…EAAEIGAQLR (93 aa).

Belongs to the phenylalanyl-tRNA synthetase beta subunit family. Type 1 subfamily. As to quaternary structure, tetramer of two alpha and two beta subunits. It depends on Mg(2+) as a cofactor.

The protein localises to the cytoplasm. The enzyme catalyses tRNA(Phe) + L-phenylalanine + ATP = L-phenylalanyl-tRNA(Phe) + AMP + diphosphate + H(+). The polypeptide is Phenylalanine--tRNA ligase beta subunit (Bifidobacterium longum (strain NCC 2705)).